The sequence spans 179 residues: Large ribosomal subunit protein uL5 (179 aa).

This sequence belongs to the universal ribosomal protein uL5 family. Part of the 50S ribosomal subunit; part of the 5S rRNA/L5/L18/L25 subcomplex. Contacts the 5S rRNA and the P site tRNA. Forms a bridge to the 30S subunit in the 70S ribosome.

Functionally, this is one of the proteins that bind and probably mediate the attachment of the 5S RNA into the large ribosomal subunit, where it forms part of the central protuberance. In the 70S ribosome it contacts protein S13 of the 30S subunit (bridge B1b), connecting the 2 subunits; this bridge is implicated in subunit movement. Contacts the P site tRNA; the 5S rRNA and some of its associated proteins might help stabilize positioning of ribosome-bound tRNAs. This Burkholderia mallei (strain ATCC 23344) protein is Large ribosomal subunit protein uL5.